We begin with the raw amino-acid sequence, 318 residues long: DNA polymerase IV (318 aa).

Residues 6–186 form the UmuC domain; sequence IIHIDMDAFY…LPLGKIPGVG (181 aa). Residues Asp-10 and Asp-104 each contribute to the Mg(2+) site. Glu-105 is a catalytic residue.

It belongs to the DNA polymerase type-Y family. Monomer. It depends on Mg(2+) as a cofactor.

It localises to the cytoplasm. The catalysed reaction is DNA(n) + a 2'-deoxyribonucleoside 5'-triphosphate = DNA(n+1) + diphosphate. Functionally, poorly processive, error-prone DNA polymerase involved in untargeted mutagenesis. Copies undamaged DNA at stalled replication forks, which arise in vivo from mismatched or misaligned primer ends. These misaligned primers can be extended by PolIV. Exhibits no 3'-5' exonuclease (proofreading) activity. May be involved in translesional synthesis, in conjunction with the beta clamp from PolIII. In Neisseria meningitidis serogroup B (strain ATCC BAA-335 / MC58), this protein is DNA polymerase IV.